A 1259-amino-acid polypeptide reads, in one-letter code: Receptor tyrosine-protein kinase erbB-2 (1259 aa).

Residues 1 to 22 (MELAAWCRWGLLLALLPSGAAG) form the signal peptide. At 23–653 (TQVCTGTDMK…EQRASPVTSI (631 aa)) the chain is on the extracellular side. Cysteines 26 and 53 form a disulfide. Asn68 carries N-linked (GlcNAc...) asparagine glycosylation. Intrachain disulfides connect Cys162-Cys192, Cys195-Cys204, Cys199-Cys212, Cys220-Cys227, Cys224-Cys235, Cys236-Cys244, Cys240-Cys252, Cys255-Cys264, Cys268-Cys295, Cys299-Cys311, Cys315-Cys331, Cys334-Cys338, and Cys342-Cys367. Thr182 is modified (phosphothreonine). N-linked (GlcNAc...) asparagine glycosylation is present at Asn259. N-linked (GlcNAc...) asparagine glycosylation is present at Asn421. 3 disulfide bridges follow: Cys475–Cys504, Cys511–Cys519, and Cys514–Cys527. An N-linked (GlcNAc...) asparagine glycan is attached at Asn529. Intrachain disulfides connect Cys530-Cys539, Cys543-Cys559, Cys562-Cys575, Cys566-Cys583, Cys586-Cys595, Cys599-Cys622, Cys625-Cys633, and Cys629-Cys641. Residue Asn570 is glycosylated (N-linked (GlcNAc...) asparagine). N-linked (GlcNAc...) asparagine glycosylation occurs at Asn628. Residues 654–674 (IAAVVGILLAVVVGLVLGILI) traverse the membrane as a helical segment. The required for interaction with KPNB1 and EEA1 stretch occupies residues 675-688 (KRRRQKIRKYTMRR). The Nuclear localization signal motif lies at 675 to 688 (KRRRQKIRKYTMRR). Topologically, residues 675-1259 (KRRRQKIRKY…PEYLGLDVPV (585 aa)) are cytoplasmic. The Protein kinase domain occupies 719–986 (LRKVKVLGSG…RMARDPQRFV (268 aa)). Residues 725-733 (LGSGAFGTV) and Lys752 contribute to the ATP site. Asp844 functions as the Proton acceptor in the catalytic mechanism. The residue at position 876 (Tyr876) is a Phosphotyrosine. Residues 1027 to 1183 (QGFFCPEPTP…PKTLSPGKNG (157 aa)) are disordered. 3 positions are modified to phosphoserine: Ser1077, Ser1082, and Ser1106. Tyr1111 carries the post-translational modification Phosphotyrosine. Position 1138 is a phosphotyrosine; by autocatalysis (Tyr1138). Over residues 1145 to 1160 (WPQPPLALEGPLPPSR) the composition is skewed to pro residues. A Phosphothreonine modification is found at Thr1165. Positions 1199 to 1201 (EYL) are interaction with PIK3C2B. Phosphotyrosine is present on Tyr1200. Residues 1203 to 1259 (PRGRAAPQPHPPPAFSPAFDNLYYWDQDPSERGSPPSTFEGTPTAENPEYLGLDVPV) are disordered. A compositionally biased stretch (polar residues) spans 1237–1247 (PPSTFEGTPTA). Residue Tyr1252 is modified to Phosphotyrosine; by autocatalysis.

This sequence belongs to the protein kinase superfamily. Tyr protein kinase family. EGF receptor subfamily. As to quaternary structure, homodimer. Heterodimer with EGFR, ERBB3 and ERBB4. Part of a complex with EGFR and either PIK3C2A or PIK3C2B. May interact with PIK3C2B when phosphorylated on Tyr-1200. Interacts with PRKCABP and PLXNB1. Interacts (when phosphorylated on Tyr-1252) with MEMO1. Interacts with MUC1. Interacts (when phosphorylated on Tyr-1138) with GRB7 (via SH2 domain). Interacts (when phosphorylated on Tyr-1252) with ERBIN. Interacts with SRC, KPNB1, PTK6, RANBP2, EEA1, CRM1, CLTC, RPA194, MYOC and ACTB. Interacts (preferentially with the tyrosine phosphorylated form) with CPNE3; this interaction occurs at the cell membrane and is increased in a growth factor heregulin-dependent manner. Interacts with HSP90AA1 and HSP90AB1 in an ATP-dependent manner; the interaction suppresses ERBB2 kinase activity. Interacts with SORL1; this interaction regulates ERBB2 subcellular distribution by promoting its recycling after internalization from endosomes back to the plasma membrane, hence stimulates ERBB2-mediated signaling. Interacts with SH3BGRL. Interacts with ROR1. Post-translationally, autophosphorylated. Autophosphorylation occurs in trans, i.e. one subunit of the dimeric receptor phosphorylates tyrosine residues on the other subunit. Ligand-binding increases phosphorylation on tyrosine residues. Signaling via SEMA4C promotes phosphorylation at Tyr-1252. Dephosphorylated by PTPN12.

The protein localises to the cell membrane. It localises to the cell projection. The protein resides in the ruffle membrane. Its subcellular location is the early endosome. It is found in the cytoplasm. The protein localises to the perinuclear region. It localises to the nucleus. It carries out the reaction L-tyrosyl-[protein] + ATP = O-phospho-L-tyrosyl-[protein] + ADP + H(+). Functionally, protein tyrosine kinase that is part of several cell surface receptor complexes, but that apparently needs a coreceptor for ligand binding. Essential component of a neuregulin-receptor complex, although neuregulins do not interact with it alone. GP30 is a potential ligand for this receptor. Regulates outgrowth and stabilization of peripheral microtubules (MTs). Upon ERBB2 activation, the MEMO1-RHOA-DIAPH1 signaling pathway elicits the phosphorylation and thus the inhibition of GSK3B at cell membrane. This prevents the phosphorylation of APC and CLASP2, allowing its association with the cell membrane. In turn, membrane-bound APC allows the localization of MACF1 to the cell membrane, which is required for microtubule capture and stabilization. In terms of biological role, in the nucleus is involved in transcriptional regulation. Associates with the 5'-TCAAATTC-3' sequence in the PTGS2/COX-2 promoter and activates its transcription. Implicated in transcriptional activation of CDKN1A; the function involves STAT3 and SRC. Involved in the transcription of rRNA genes by RNA Pol I and enhances protein synthesis and cell growth. The polypeptide is Receptor tyrosine-protein kinase erbB-2 (ERBB2) (Canis lupus familiaris (Dog)).